Consider the following 260-residue polypeptide: Adenosylcobinamide-GDP ribazoletransferase (260 aa).

A run of 6 helical transmembrane segments spans residues 40–60 (AFPF…LLLL), 64–84 (ADPL…TGAL), 117–137 (YGAI…AAIV), 142–162 (PLAA…AITW), 189–209 (FALV…FGLW), and 210–230 (PLVA…VFIR).

The protein belongs to the CobS family. The cofactor is Mg(2+).

Its subcellular location is the cell inner membrane. It carries out the reaction alpha-ribazole + adenosylcob(III)inamide-GDP = adenosylcob(III)alamin + GMP + H(+). The catalysed reaction is alpha-ribazole 5'-phosphate + adenosylcob(III)inamide-GDP = adenosylcob(III)alamin 5'-phosphate + GMP + H(+). It participates in cofactor biosynthesis; adenosylcobalamin biosynthesis; adenosylcobalamin from cob(II)yrinate a,c-diamide: step 7/7. Joins adenosylcobinamide-GDP and alpha-ribazole to generate adenosylcobalamin (Ado-cobalamin). Also synthesizes adenosylcobalamin 5'-phosphate from adenosylcobinamide-GDP and alpha-ribazole 5'-phosphate. This chain is Adenosylcobinamide-GDP ribazoletransferase, found in Rhizobium etli (strain CIAT 652).